The sequence spans 210 residues: Urease accessory protein UreG (210 aa).

Residue 15 to 22 coordinates GTP; it reads GPVGSGKT.

Belongs to the SIMIBI class G3E GTPase family. UreG subfamily. In terms of assembly, homodimer. UreD, UreF and UreG form a complex that acts as a GTP-hydrolysis-dependent molecular chaperone, activating the urease apoprotein by helping to assemble the nickel containing metallocenter of UreC. The UreE protein probably delivers the nickel.

It is found in the cytoplasm. Functionally, facilitates the functional incorporation of the urease nickel metallocenter. This process requires GTP hydrolysis, probably effectuated by UreG. This Ralstonia nicotianae (strain ATCC BAA-1114 / GMI1000) (Ralstonia solanacearum) protein is Urease accessory protein UreG.